Here is a 556-residue protein sequence, read N- to C-terminus: MSEAEARPTNFIRQIIDDDLASGKHTSVHTRFPPEPNGYLHIGHAKSIYLNFGIAQDYQGQCNLRFDDTNPVKEDMEYVDSIKHDVQWLGFNWSGDIHYSSDYFDKLHDYALELIDKGLAYVDQLSPDQIRDYRGTLTRPGKNSPYRDRSVEENRALFASMRQGEFAEGSACLRAKIDMASPFMVMRDPVLYRIKFADHHQTGSKWCIYPMYDFTHCISDALEGITHSLCTLEFQDNRRLYDWVLDNITINVHPRQYEFSRLNLEYAIMSKRKLNLLVTEKIVEGWDDPRMPTISGLRRRGYTAASIREFCRRIGVTKQDNNVEMAALEACIREDLNDRAPRAMAVIDPVRVVIESLPMGYEQDIAMPNHPNRPEMGTRQVAFSREIYIDRADFREEANKQYKRLVLGKEVRLRNAFVIKAEHVEKDPQGQITTIFCRHDPDTLSKDPADGRKVKGVIHWVSANRSLAAEFRLYDRLFSEANPAAAEDFLSTLNPDSLVIRQGFVEAGVPAANTGEPFQFEREGYFCADSRYFSPTHPVFNRTVGLRDTWAQRAAM.

The 'HIGH' region motif lies at 34 to 44; that stretch reads PEPNGYLHIGH. ATP-binding positions include 35-37 and 41-47; these read EPN and HIGHAKS. Asp67 and Tyr212 together coordinate L-glutamine. ATP is bound by residues Thr231, 261-262, and 269-271; these read RL and MSK. The short motif at 268-272 is the 'KMSKS' region element; it reads IMSKR.

This sequence belongs to the class-I aminoacyl-tRNA synthetase family. As to quaternary structure, monomer.

Its subcellular location is the cytoplasm. The catalysed reaction is tRNA(Gln) + L-glutamine + ATP = L-glutaminyl-tRNA(Gln) + AMP + diphosphate. This is Glutamine--tRNA ligase from Sodalis glossinidius (strain morsitans).